The primary structure comprises 66 residues: MKTDIHPKYVAAKIKCACGTVIETRSTSGDISVEICSNCHPFFTGKSKLVDTTGRVDKFKKKYKMK.

Zn(2+) is bound by residues cysteine 16, cysteine 18, cysteine 36, and cysteine 39.

The protein belongs to the bacterial ribosomal protein bL31 family. Type A subfamily. In terms of assembly, part of the 50S ribosomal subunit. It depends on Zn(2+) as a cofactor.

In terms of biological role, binds the 23S rRNA. The chain is Large ribosomal subunit protein bL31 from Leptospira biflexa serovar Patoc (strain Patoc 1 / Ames).